The following is a 383-amino-acid chain: MNELEFVTKHRRHLHQHPELSLHEFETTAYIKAFLDSLNIKYDCPLETGVIAYLEGNDSHTIAYRADIDALPILEENDVPYRSQSDHVMHACGHDGHTTALMLFVQRCKDMQDSGQLPQNVVFIFQPAEETGGGANRLIKAGAFDKYPIEAVFGIHVNPFADEGIAVIRDEEITASATEYRFFLTGLSSHVADKEQGHSCGEALQHVLTQISQIQQFHLNGLKRNIVHIGHFKAGEAINTVPSNGYLEGTIRTYDIDDLTIVKNQMQKIAESVKLLFNVDCEVKFAEGYPPTINSPKLRTQIEDALIKADLNVYDKPTPFLFGEDFSFYGQQLAPAYFVFIGTRNEDKGFVTGLHTSHLNFDEKVLINVVNFYENLLNNYKEV.

This sequence belongs to the peptidase M20 family.

This is an uncharacterized protein from Staphylococcus aureus (strain bovine RF122 / ET3-1).